A 178-amino-acid chain; its full sequence is Ribosome maturation factor RimM (178 aa).

The region spanning 101–178 is the PRC barrel domain; the sequence is ADEYYWYQLV…VMRVEWDADF (78 aa).

Belongs to the RimM family. As to quaternary structure, binds ribosomal protein uS19.

Its subcellular location is the cytoplasm. Functionally, an accessory protein needed during the final step in the assembly of 30S ribosomal subunit, possibly for assembly of the head region. Essential for efficient processing of 16S rRNA. May be needed both before and after RbfA during the maturation of 16S rRNA. It has affinity for free ribosomal 30S subunits but not for 70S ribosomes. The polypeptide is Ribosome maturation factor RimM (Pseudomonas putida (strain ATCC 700007 / DSM 6899 / JCM 31910 / BCRC 17059 / LMG 24140 / F1)).